The following is a 411-amino-acid chain: Elongation factor 1-gamma (411 aa).

The 82-residue stretch at 3 to 84 (LTLWSGVNPE…HIARLDRSGG (82 aa)) folds into the GST N-terminal domain. One can recognise a GST C-terminal domain in the interval 90–216 (TPLEGSQVDM…QGATFGAREG (127 aa)). Residues 212 to 265 (GAREGGAKGQGRGCARPGREEAERAAAAADGAEEEDEAPREKKKPNPLDELPPS) form a disordered region. The span at 214 to 223 (REGGAKGQGR) shows a compositional bias: gly residues. Positions 255–411 (KPNPLDELPP…RPVLEGRVFK (157 aa)) constitute an EF-1-gamma C-terminal domain.

As to quaternary structure, EF-1 is composed of four subunits: alpha, beta, delta, and gamma.

Functionally, probably plays a role in anchoring the complex to other cellular components. The polypeptide is Elongation factor 1-gamma (Trypanosoma cruzi).